The following is a 667-amino-acid chain: Protein OS-9 (667 aa).

A signal peptide spans 1–25; it reads MAAETLLSSLLGLLLLGLLLPATLT. An MRH domain is found at 108-230; that stretch reads APCLLKTKDW…TIRTPRLCPH (123 aa). Residues cysteine 110 and cysteine 123 are joined by a disulfide bond. A mannooligosaccharide derivative is bound by residues tryptophan 117, tryptophan 118, and glutamine 130. Asparagine 177 carries N-linked (GlcNAc...) asparagine glycosylation. Disulfide bonds link cysteine 181/cysteine 216 and cysteine 196/cysteine 228. A mannooligosaccharide derivative is bound by residues aspartate 182, arginine 188, glutamate 212, and tyrosine 218. Disordered stretches follow at residues 262 to 450, 506 to 541, and 636 to 667; these read QADS…SDRE, EKQS…EHRV, and ERQR…EFDF. 3 stretches are compositionally biased toward basic and acidic residues: residues 263 to 279, 304 to 328, and 396 to 408; these read ADSK…RQDP, ENSK…KEET, and PSRE…KGDP. A compositionally biased stretch (acidic residues) spans 410 to 429; that stretch reads QQNEVEEEEDDEDEDEDEDE. The segment covering 430-450 has biased composition (basic and acidic residues); sequence RQLLGEFEKELEGILLPSDRE. The segment covering 514-523 has biased composition (basic residues); the sequence is KKHRKRRVVP. Over residues 636-647 the composition is skewed to basic and acidic residues; it reads ERQRQKELESNY.

Belongs to the OS-9 family. Component of the HRD1 complex, which comprises at least SYNV1/HRD1, DERL1/2, FAM8A1, HERPUD1/HERP, OS9, SEL1L and UBE2J1. FAM8A1 is stabilized by interaction with SYNV1, which prevents its proteasomal degradation. OS9 and UBE2J1 recruitment to the complex may be mediated by SEL1L. Through this complex, may interact with ERLEC1 and HSPA5. Interacts (via C-terminus) with CPNE6 (via second C2 domain); this interaction occurs in a calcium-dependent manner in vitro. Interacts with CREB3. Post-translationally, intramolecular disulfide bonds.

The protein localises to the endoplasmic reticulum lumen. Functionally, lectin component of the HRD1 complex, which functions in endoplasmic reticulum (ER) quality control and ER-associated degradation (ERAD). Specifically recognizes and binds improperly folded glycoproteins as well as hyperglycosylated proteins, retain them in the ER, and transfers them to the ubiquitination machinery and promote their degradation. Possible targets include TRPV4 as well as hyperglycosylated HSP90B1. This is Protein OS-9 (OS9) from Bos taurus (Bovine).